The primary structure comprises 812 residues: MAAPAGGLGDAELREAQRDYLDFLDDEEDQGVYHGKVRDMISDNQYRLLVNINDLRRRNEKRANRLLSNAFEELIAFQRALKDFVASVDATYAKQYEDFYIGLEGSFGSKHVSPRTLTACFLSCIVCVEGIVTKCSLIRPKVVRSVHYCPATKKTIERRYTDLTSLDAFPSSTVYPTKDEENNPLETEYGLSVYKDHQTISIQEMPEKAPAGQLPRSVDVILDDDLVDKVKPGDRIQVVGTYRCLPGKKGGYTSGTFRTILIACHIKQMSKDARPLYSANDVAKIKRFSKSRSKDIFNQLARSLAPSIHGHEFIKKALLCMLLGGVEKVLENGSRIRGDINILLIGDPSVAKSQLLRYVLGTAPRAVGTTGRGSSGVGLTAAVTTDQETGERRLEAGAMVLADRGVVCIDEFDKMSDIDRTAIHEVMEQGRVTIAKAGIHARLNSRCSVLAAANPVYGRYDQYKTPMENIGLQDSLLSRFDLLFIMLDQMDSEQDREISDHVLRMHRYRNPNEQDGDAMPLGSAVEILATDDPDFAQEEEQELQVYEKHDDLLHGPNRRKEKIVSMEFMRKYIHVAKMIKPVLTQESADYIAEEYSSLRSQNQMNSDIARTSPVTARTLETLIRLSTAHAKARMSKTVDLQDAEAALELVQFAYFKKVLEKEKKRKKQVEDDSETEKEEEEEETQPEKEGRKQRRKKARTEGEEESYDPYDFSDAEQEMPEVQAHTPKTPESSATGEAKKPELADPRLKAFKAALLEVFKSSHAQSVGLKNVMESINRDNPEPFSLAGVKVALAHMQDDNQIMVSDDIIFLI.

The MCM domain maps to 296-503; sequence IFNQLARSLA…QDREISDHVL (208 aa). Residues Gln-354, Leu-394, Glu-395, Ala-396, and Ala-398 each contribute to the ADP site. Positions 478-481 match the Arginine finger motif; sequence SRFD. ATP-binding residues include Ala-524 and Arg-665. The segment at 663–741 is disordered; that stretch reads KKRKKQVEDD…SSATGEAKKP (79 aa). Composition is skewed to acidic residues over residues 671 to 684 and 702 to 719; these read DDSE…EEET and GEEE…EQEM.

The protein belongs to the MCM family. In terms of assembly, component of the MCM2-7 complex. The complex forms a toroidal hexameric ring with the proposed subunit order MCM2-MCM6-MCM4-MCM7-MCM3-MCM5. Component of the CMG helicase complex, a hexameric ring of related MCM2-7 subunits stabilized by CDC45 and the tetrameric GINS complex.

The protein localises to the nucleus. It is found in the chromosome. It carries out the reaction ATP + H2O = ADP + phosphate + H(+). Functionally, acts as a component of the MCM2-7 complex (MCM complex) which is the replicative helicase essential for 'once per cell cycle' DNA replication initiation and elongation in eukaryotic cells. Core component of CDC45-MCM-GINS (CMG) helicase, the molecular machine that unwinds template DNA during replication, and around which the replisome is built. The active ATPase sites in the MCM2-7 ring are formed through the interaction surfaces of two neighboring subunits such that a critical structure of a conserved arginine finger motif is provided in trans relative to the ATP-binding site of the Walker A box of the adjacent subunit. The six ATPase active sites, however, are likely to contribute differentially to the complex helicase activity. Required for the entry in S phase and for cell division. This is DNA replication licensing factor MCM3 (MCM3) from Gallus gallus (Chicken).